The chain runs to 1048 residues: Integrin alpha-V (1048 aa).

Residues 1-30 (MAFPPRRRLRLGPRGLPLLLSGLLLPLCRA) form the signal peptide. The Extracellular segment spans residues 31 to 992 (FNLDVESPAE…WGIQPAPMPV (962 aa)). 7 FG-GAP repeats span residues 32–98 (NLDV…RRCQ), 109–170 (DYAK…VEYA), 173–225 (RSKN…VSKY), 237–291 (QLAT…GKNM), 292–357 (SSLH…GDFQ), 358–415 (TIKL…GLNA), and 419–482 (QILE…VYPS). Asn74 is a glycosylation site (N-linked (GlcNAc...) asparagine). 3 cysteine pairs are disulfide-bonded: Cys89/Cys97, Cys138/Cys158, and Cys172/Cys185. Residues Asp260, Asn262, Asp264, Ile266, and Asp268 each contribute to the Ca(2+) site. N-linked (GlcNAc...) asparagine glycans are attached at residues Asn290 and Asn296. Ca(2+)-binding residues include Asp314, Asn316, Asp318, Tyr320, Asp322, Asp379, Asp381, Asp383, Phe385, Asp387, Asp443, Asp445, Asn447, Tyr449, and Asp451. The N-linked (GlcNAc...) asparagine glycan is linked to Asn488. Intrachain disulfides connect Cys491–Cys502 and Cys508–Cys565. N-linked (GlcNAc...) asparagine glycosylation is found at Asn554 and Asn615. Cystine bridges form between Cys626–Cys632 and Cys698–Cys711. N-linked (GlcNAc...) asparagine glycosylation is found at Asn704, Asn835, Asn851, and Asn874. 2 disulfide bridges follow: Cys852–Cys914 and Cys904–Cys909. Asn945, Asn973, and Asn980 each carry an N-linked (GlcNAc...) asparagine glycan. Residues 993–1016 (PVWVIILAVLAGLLLLAVLVFVMY) form a helical membrane-spanning segment. The Cytoplasmic portion of the chain corresponds to 1017–1048 (RMGFFKRVRPPQEEQEREQLQPHENGEGNSET). The GFFKR motif signature appears at 1019–1023 (GFFKR). The segment covering 1027–1042 (PQEEQEREQLQPHENG) has biased composition (basic and acidic residues). Positions 1027-1048 (PQEEQEREQLQPHENGEGNSET) are disordered.

Belongs to the integrin alpha chain family. As to quaternary structure, heterodimer of an alpha and a beta subunit. The alpha subunit is composed of a heavy and a light chain linked by a disulfide bond. Alpha-V (ITGAV) associates with either beta-1 (ITGB1), beta-3 (ITGB3), beta-5 (ITGB5), beta-6 (ITGB6) or beta-8 (ITGB8). Interacts with RAB25. Interacts with CIB1. Integrins ITGAV:ITGB3 and ITGAV:ITGB5 interact with FBLN5 (via N-terminus). ITGAV:ITGB3 and ITGAV:ITGB5 interact with CCN3. ITGAV:ITGB3 interacts with ADGRA2. ITGAV:ITGB3 interacts with FGF2; it is likely that FGF2 can simultaneously bind ITGAV:ITGB3 and FGF receptors. ITGAV:ITGB3 interacts with SELP (via C-type lectin domain); the interaction mediates cell-cell interaction and adhesion. ITGAV:ITGB3 is found in a ternary complex with CX3CR1 and CX3CL1. ITGAV:ITGB3 is found in a ternary complex with NRG1 and ERBB3. ITGAV:ITGB3 is found in a ternary complex with FGF1 and FGFR1. ITGAV:ITGB3 is found in a ternary complex with IGF1 and IGF1R. ITGAV:ITGB3 interacts with IGF2. ITGAV:ITGB3 and ITGAV:ITGB6 interact with FBN1. ITGAV:ITGB3 interacts with CD9, CD81 and CD151 (via second extracellular domain). ITGAV:ITGB6 interacts with TGFB1. ITGAV:ITGB3 interacts with PTN. Forms a complex with PTPRZ1 and PTN that stimulates endothelial cell migration through ITGB3 'Tyr-773' phosphorylation. Interacts with TM4SF19. In terms of assembly, (Microbial infection) Alpha-V/beta-6 and alpha-V/beta-3 bind to foot-and-mouth disease virus (FMDV) VP1 protein and acts as a receptor for this virus.

It localises to the cell membrane. The protein localises to the cell junction. The protein resides in the focal adhesion. The alpha-V (ITGAV) integrins are receptors for vitronectin, cytotactin, fibronectin, fibrinogen, laminin, matrix metalloproteinase-2, osteopontin, osteomodulin, prothrombin, thrombospondin, TGFB1 and vWF. They recognize the sequence R-G-D in a wide array of ligands. Alpha-V integrins may play a role in embryo implantation, angiogenesis and wound healing. ITGAV:ITGB3 binds to fractalkine (CX3CL1) and may act as its coreceptor in CX3CR1-dependent fractalkine signaling. ITGAV:ITGB3 binds to NRG1 (via EGF domain) and this binding is essential for NRG1-ERBB signaling. ITGAV:ITGB3 binds to FGF1 and this binding is essential for FGF1 signaling. ITGAV:ITGB3 binds to FGF2 and this binding is essential for FGF2 signaling. ITGAV:ITGB3 binds to IGF1 and this binding is essential for IGF1 signaling. ITGAV:ITGB3 binds to IGF2 and this binding is essential for IGF2 signaling. ITGAV:ITGB3 binds to IL1B and this binding is essential for IL1B signaling. ITGAV:ITGB3 binds to PLA2G2A via a site (site 2) which is distinct from the classical ligand-binding site (site 1) and this induces integrin conformational changes and enhanced ligand binding to site 1. ITGAV:ITGB3 and ITGAV:ITGB6 act as receptors for fibrillin-1 (FBN1) and mediate R-G-D-dependent cell adhesion to FBN1. Integrin alpha-V/beta-6 or alpha-V/beta-8 (ITGAV:ITGB6 or ITGAV:ITGB8) mediates R-G-D-dependent release of transforming growth factor beta-1 (TGF-beta-1) from regulatory Latency-associated peptide (LAP), thereby playing a key role in TGF-beta-1 activation. ITGAV:ITGB3 acts as a receptor for CD40LG. ITGAV:ITGB3 acts as a receptor for IBSP and promotes cell adhesion and migration to IBSP. The polypeptide is Integrin alpha-V (ITGAV) (Bos taurus (Bovine)).